Reading from the N-terminus, the 447-residue chain is UDP-N-acetylmuramate--L-alanine ligase (447 aa).

108-114 (GSHGKTS) lines the ATP pocket.

This sequence belongs to the MurCDEF family.

It is found in the cytoplasm. The catalysed reaction is UDP-N-acetyl-alpha-D-muramate + L-alanine + ATP = UDP-N-acetyl-alpha-D-muramoyl-L-alanine + ADP + phosphate + H(+). It participates in cell wall biogenesis; peptidoglycan biosynthesis. Functionally, cell wall formation. The sequence is that of UDP-N-acetylmuramate--L-alanine ligase from Listeria welshimeri serovar 6b (strain ATCC 35897 / DSM 20650 / CCUG 15529 / CIP 8149 / NCTC 11857 / SLCC 5334 / V8).